The sequence spans 91 residues: DNA-directed RNA polymerase subunit omega (91 aa).

This sequence belongs to the RNA polymerase subunit omega family. In terms of assembly, the RNAP catalytic core consists of 2 alpha, 1 beta, 1 beta' and 1 omega subunit. When a sigma factor is associated with the core the holoenzyme is formed, which can initiate transcription.

The catalysed reaction is RNA(n) + a ribonucleoside 5'-triphosphate = RNA(n+1) + diphosphate. In terms of biological role, promotes RNA polymerase assembly. Latches the N- and C-terminal regions of the beta' subunit thereby facilitating its interaction with the beta and alpha subunits. In Yersinia enterocolitica serotype O:8 / biotype 1B (strain NCTC 13174 / 8081), this protein is DNA-directed RNA polymerase subunit omega.